The primary structure comprises 130 residues: Glycine cleavage system H protein (130 aa).

One can recognise a Lipoyl-binding domain in the interval 24–106 (EYTVGITEHA…YHEGWLFRIK (83 aa)). Position 65 is an N6-lipoyllysine (Lys-65).

Belongs to the GcvH family. The glycine cleavage system is composed of four proteins: P, T, L and H. The cofactor is (R)-lipoate.

Its function is as follows. The glycine cleavage system catalyzes the degradation of glycine. The H protein shuttles the methylamine group of glycine from the P protein to the T protein. This Photorhabdus laumondii subsp. laumondii (strain DSM 15139 / CIP 105565 / TT01) (Photorhabdus luminescens subsp. laumondii) protein is Glycine cleavage system H protein.